The following is a 721-amino-acid chain: 1,4-alpha-glucan branching enzyme GlgB (721 aa).

Aspartate 404 (nucleophile) is an active-site residue. Glutamate 457 functions as the Proton donor in the catalytic mechanism.

The protein belongs to the glycosyl hydrolase 13 family. GlgB subfamily. In terms of assembly, monomer.

The enzyme catalyses Transfers a segment of a (1-&gt;4)-alpha-D-glucan chain to a primary hydroxy group in a similar glucan chain.. It participates in glycan biosynthesis; glycogen biosynthesis. Its function is as follows. Catalyzes the formation of the alpha-1,6-glucosidic linkages in glycogen by scission of a 1,4-alpha-linked oligosaccharide from growing alpha-1,4-glucan chains and the subsequent attachment of the oligosaccharide to the alpha-1,6 position. This is 1,4-alpha-glucan branching enzyme GlgB from Bradyrhizobium diazoefficiens (strain JCM 10833 / BCRC 13528 / IAM 13628 / NBRC 14792 / USDA 110).